Reading from the N-terminus, the 122-residue chain is Large ribosomal subunit protein uL14 (122 aa).

Belongs to the universal ribosomal protein uL14 family. Part of the 50S ribosomal subunit. Forms a cluster with proteins L3 and L19. In the 70S ribosome, L14 and L19 interact and together make contacts with the 16S rRNA in bridges B5 and B8.

In terms of biological role, binds to 23S rRNA. Forms part of two intersubunit bridges in the 70S ribosome. The polypeptide is Large ribosomal subunit protein uL14 (Borrelia hermsii (strain HS1 / DAH)).